The primary structure comprises 146 residues: uncharacterized protein (146 aa).

The segment at 87-121 (SRSHHSTAKSAKSALSSDSGDGSDPDPEPETFPSA) is disordered. The segment covering 94–106 (AKSAKSALSSDSG) has biased composition (low complexity).

This is an uncharacterized protein from Escherichia coli (strain K12).